The sequence spans 338 residues: Tagatose 1,6-diphosphate aldolase (338 aa).

This sequence belongs to the aldolase LacD family.

It carries out the reaction D-tagatofuranose 1,6-bisphosphate = D-glyceraldehyde 3-phosphate + dihydroxyacetone phosphate. It functions in the pathway carbohydrate metabolism; D-tagatose 6-phosphate degradation; D-glyceraldehyde 3-phosphate and glycerone phosphate from D-tagatose 6-phosphate: step 2/2. The chain is Tagatose 1,6-diphosphate aldolase from Listeria monocytogenes serovar 1/2a (strain ATCC BAA-679 / EGD-e).